Here is a 302-residue protein sequence, read N- to C-terminus: Sulfate adenylyltransferase subunit 2 (302 aa).

The interval arginine 280 to phenylalanine 302 is disordered.

This sequence belongs to the PAPS reductase family. CysD subfamily. As to quaternary structure, heterodimer composed of CysD, the smaller subunit, and CysN.

It carries out the reaction sulfate + ATP + H(+) = adenosine 5'-phosphosulfate + diphosphate. It participates in sulfur metabolism; hydrogen sulfide biosynthesis; sulfite from sulfate: step 1/3. Functionally, with CysN forms the ATP sulfurylase (ATPS) that catalyzes the adenylation of sulfate producing adenosine 5'-phosphosulfate (APS) and diphosphate, the first enzymatic step in sulfur assimilation pathway. APS synthesis involves the formation of a high-energy phosphoric-sulfuric acid anhydride bond driven by GTP hydrolysis by CysN coupled to ATP hydrolysis by CysD. The chain is Sulfate adenylyltransferase subunit 2 from Vibrio cholerae serotype O1 (strain ATCC 39541 / Classical Ogawa 395 / O395).